Reading from the N-terminus, the 536-residue chain is Multicopper oxidase CueO (536 aa).

A signal peptide (tat-type signal) is located at residues 1–28 (MLRRDFLKYSVALGVASALPLWSRAAFA). 3 Plastocyanin-like domains span residues 53-165 (KAGQ…IEDD), 229-295 (GWLR…AFDL), and 424-536 (FHNA…GFTV). Residues His101, His103, His141, and His143 each contribute to the Cu cation site. Cu cation is bound by residues His463, His466, His468, His519, Cys520, His521, and His525.

The protein belongs to the multicopper oxidase family. In terms of assembly, monomer. It depends on Cu cation as a cofactor. Post-translationally, predicted to be exported by the Tat system. The position of the signal peptide cleavage has not been experimentally proven.

It is found in the periplasm. The catalysed reaction is 4 Cu(+) + O2 + 4 H(+) = 4 Cu(2+) + 2 H2O. Its function is as follows. Multicopper oxidase involved in copper homeostasis and copper tolerance under both aerobic and anaerobic conditions. Is responsible for the oxidation of Cu(+) to the less harmful Cu(2+) in the periplasm, thereby preventing Cu(+) from entering the cytoplasm. The protein is Multicopper oxidase CueO (cueO) of Salmonella typhimurium (strain LT2 / SGSC1412 / ATCC 700720).